The following is a 128-amino-acid chain: Probable 4-amino-4-deoxy-L-arabinose-phosphoundecaprenol flippase subunit ArnF (128 aa).

The Cytoplasmic segment spans residues 1–2 (MG). The chain crosses the membrane as a helical span at residues 3–23 (LMWGLFSVIIASAAQLSLGFA). The Periplasmic portion of the chain corresponds to 24–35 (ASHLPPMTHLWD). Residues 36–56 (FIAALLAFGLDARILLLGLLG) traverse the membrane as a helical segment. The Cytoplasmic segment spans residues 57–76 (YLLSVFCWYKTLHKLALSKA). Residues 77–97 (YALLSMSYVLVWIASMVLPGW) traverse the membrane as a helical segment. The Periplasmic portion of the chain corresponds to 98 to 100 (EGT). The helical transmembrane segment at 101 to 121 (FSLKALLGVACIMSGLMLIFL) threads the bilayer. At 122 to 128 (PTTKQRY) the chain is on the cytoplasmic side.

Belongs to the ArnF family. Heterodimer of ArnE and ArnF.

It is found in the cell inner membrane. The protein operates within bacterial outer membrane biogenesis; lipopolysaccharide biosynthesis. Translocates 4-amino-4-deoxy-L-arabinose-phosphoundecaprenol (alpha-L-Ara4N-phosphoundecaprenol) from the cytoplasmic to the periplasmic side of the inner membrane. The chain is Probable 4-amino-4-deoxy-L-arabinose-phosphoundecaprenol flippase subunit ArnF from Escherichia coli O127:H6 (strain E2348/69 / EPEC).